The following is a 349-amino-acid chain: N-acetyltaurine hydrolase (349 aa).

Residues His26, His28, Glu169, His201, His230, and Asp298 each coordinate a divalent metal cation.

This sequence belongs to the metallo-dependent hydrolases superfamily. Phosphotriesterase family. The cofactor is a divalent metal cation. As to expression, expressed in the kidney, liver and brainstem.

It localises to the cytoplasm. The protein resides in the cytosol. It carries out the reaction N-acetyltaurine + H2O = taurine + acetate. The enzyme catalyses N-propanoyltaurine + H2O = propanoate + taurine. The catalysed reaction is N-acetyl-L-methionine + H2O = L-methionine + acetate. It catalyses the reaction N-acetyl-L-isoleucine + H2O = L-isoleucine + acetate. It carries out the reaction N-acetyl-L-leucine + H2O = L-leucine + acetate. The enzyme catalyses N-acetyl-L-valine + H2O = L-valine + acetate. In terms of biological role, N-acetyltaurine hydrolase that regulates feeding by catalyzing the hydrolysis of N-acetyltaurine into taurine and acetate. N-acetyltaurine has anorexigenic and anti-obesity effects that are dependent on GFRAL receptor and GDF15. PTER also acts on other N-acetyl amino acids (Met, Ile, Leu, Val) and N-propionyltaurine, but at lower rates. This Mus musculus (Mouse) protein is N-acetyltaurine hydrolase.